Consider the following 226-residue polypeptide: MRKNWTDEEIRVLQNNYEYVDTEIIANFLNRSYHSIKNKATRLGISKNSEWTEDEDIYLKYFVYENDDDISKAAEFLGRTKDAVINRLVKLRKRDSSVSFIRRPWTEKEDEILKKNYIIMSNAQFAERLRRTKASVAGRKVLLGLTNKHMSKEDDKIIRHLGNQGYTIKEISAEMNLSYCLVKNYIRNHRINYRRESKNGMNGWRKEADATYSLYINAKKIKEGQA.

The protein to L.innocua lin2408 and lin2600.

This is an uncharacterized protein from Listeria innocua serovar 6a (strain ATCC BAA-680 / CLIP 11262).